The primary structure comprises 179 residues: ATP-dependent protease subunit HslV (179 aa).

Thr-7 is an active-site residue. Residues Ala-162, Cys-165, and Thr-168 each coordinate Na(+).

The protein belongs to the peptidase T1B family. HslV subfamily. As to quaternary structure, a double ring-shaped homohexamer of HslV is capped on each side by a ring-shaped HslU homohexamer. The assembly of the HslU/HslV complex is dependent on binding of ATP.

It is found in the cytoplasm. The catalysed reaction is ATP-dependent cleavage of peptide bonds with broad specificity.. Allosterically activated by HslU binding. Protease subunit of a proteasome-like degradation complex believed to be a general protein degrading machinery. The polypeptide is ATP-dependent protease subunit HslV (Nitrosococcus oceani (strain ATCC 19707 / BCRC 17464 / JCM 30415 / NCIMB 11848 / C-107)).